Here is a 78-residue protein sequence, read N- to C-terminus: Beta-defensin 135 (78 aa).

The signal sequence occupies residues 1-24; it reads MATRSVLLALVVLNLLFYVPPGRS. Cystine bridges form between Cys-37-Cys-64 and Cys-48-Cys-66.

It belongs to the beta-defensin family.

It localises to the secreted. Its function is as follows. Has antibacterial activity. The polypeptide is Beta-defensin 135 (DEFB135) (Pan troglodytes (Chimpanzee)).